Here is a 257-residue protein sequence, read N- to C-terminus: Imidazole glycerol phosphate synthase subunit HisF (257 aa).

Residues aspartate 11 and aspartate 130 contribute to the active site.

This sequence belongs to the HisA/HisF family. In terms of assembly, heterodimer of HisH and HisF.

It is found in the cytoplasm. It catalyses the reaction 5-[(5-phospho-1-deoxy-D-ribulos-1-ylimino)methylamino]-1-(5-phospho-beta-D-ribosyl)imidazole-4-carboxamide + L-glutamine = D-erythro-1-(imidazol-4-yl)glycerol 3-phosphate + 5-amino-1-(5-phospho-beta-D-ribosyl)imidazole-4-carboxamide + L-glutamate + H(+). It participates in amino-acid biosynthesis; L-histidine biosynthesis; L-histidine from 5-phospho-alpha-D-ribose 1-diphosphate: step 5/9. Functionally, IGPS catalyzes the conversion of PRFAR and glutamine to IGP, AICAR and glutamate. The HisF subunit catalyzes the cyclization activity that produces IGP and AICAR from PRFAR using the ammonia provided by the HisH subunit. The polypeptide is Imidazole glycerol phosphate synthase subunit HisF (Aeromonas hydrophila subsp. hydrophila (strain ATCC 7966 / DSM 30187 / BCRC 13018 / CCUG 14551 / JCM 1027 / KCTC 2358 / NCIMB 9240 / NCTC 8049)).